The following is a 402-amino-acid chain: Multidrug resistance protein MdtH (402 aa).

Residues 1–12 are Cytoplasmic-facing; it reads MSRVSQARNLGK. A helical membrane pass occupies residues 13–33; sequence YFLLIDNMLVVLGFFVVFPLI. At 34-98 the chain is on the periplasmic side; that stretch reads SIRFVDQMGW…GFATMGIAHE (65 aa). Residues 99–116 form a helical membrane-spanning segment; the sequence is PWLLWFSCLLSGLGGTLF. The Cytoplasmic segment spans residues 117–138; the sequence is DPPRSALVVKLIRPQQRGRFFS. The helical transmembrane segment at 139 to 159 threads the bilayer; that stretch reads LLMMQDSAGAVIGALLGSWLL. Topologically, residues 160–164 are periplasmic; it reads QYDFR. The helical transmembrane segment at 165–185 threads the bilayer; it reads LVCATGAVLFVLCAAFNAWLL. Topologically, residues 186–213 are cytoplasmic; sequence PAWKLSTVRTPVREGMTRVMRDKRFVTY. Residues 214–234 traverse the membrane as a helical segment; that stretch reads VLTLAGYYMLAVQVMLMLPIM. The Periplasmic portion of the chain corresponds to 235–243; it reads VNDVAGAPS. The chain crosses the membrane as a helical span at residues 244–264; sequence AVKWMYAIEACLSLTLLYPIA. Over 265–276 the chain is Cytoplasmic; it reads RWSEKHFRLEHR. A helical membrane pass occupies residues 277–297; the sequence is LMAGLLIMSLSMMPVGMVSGL. The Periplasmic portion of the chain corresponds to 298-299; the sequence is QQ. Residues 300 to 320 traverse the membrane as a helical segment; it reads LFNLICLFYIGSIIAEPARET. Residues 321 to 339 are Cytoplasmic-facing; it reads LSASLADARARGSYMGFSR. Residues 340 to 360 traverse the membrane as a helical segment; that stretch reads LGLAIGGAIGYIGGGWLFDLG. Over 361 to 367 the chain is Periplasmic; that stretch reads KSAHQPE. A helical transmembrane segment spans residues 368 to 388; the sequence is LPWMMLGIIGIFTFLALGWQF. Residues 389–402 are Cytoplasmic-facing; sequence SQKRAARRLLERDA.

This sequence belongs to the major facilitator superfamily. DHA1 family. MdtH (TC 2.A.1.2.21) subfamily.

The protein localises to the cell inner membrane. Confers resistance to norfloxacin and enoxacin. This is Multidrug resistance protein MdtH from Escherichia coli O9:H4 (strain HS).